Here is a 118-residue protein sequence, read N- to C-terminus: Ribonuclease P protein component 4 (118 aa).

Zn(2+) is bound by residues cysteine 59, cysteine 62, cysteine 85, and cysteine 88.

The protein belongs to the eukaryotic/archaeal RNase P protein component 4 family. Consists of a catalytic RNA component and at least 4-5 protein subunits. Zn(2+) is required as a cofactor.

The protein resides in the cytoplasm. The catalysed reaction is Endonucleolytic cleavage of RNA, removing 5'-extranucleotides from tRNA precursor.. Part of ribonuclease P, a protein complex that generates mature tRNA molecules by cleaving their 5'-ends. This Sulfolobus acidocaldarius (strain ATCC 33909 / DSM 639 / JCM 8929 / NBRC 15157 / NCIMB 11770) protein is Ribonuclease P protein component 4.